Reading from the N-terminus, the 51-residue chain is Small ribosomal subunit protein eS31 (51 aa).

Zn(2+) is bound by residues Cys22, Cys25, Cys40, and Cys43. The C4-type zinc-finger motif lies at 22-43 (CPRCGPGVFMADHGDRWACGRC).

This sequence belongs to the eukaryotic ribosomal protein eS31 family. As to quaternary structure, part of the 30S ribosomal subunit. The cofactor is Zn(2+).

The protein is Small ribosomal subunit protein eS31 of Pyrococcus abyssi (strain GE5 / Orsay).